The following is a 529-amino-acid chain: Aldehyde dehydrogenase 1 (529 aa).

Residue 251-256 (GSTYVG) participates in NAD(+) binding. Residues Glu-273 and Cys-307 contribute to the active site.

This sequence belongs to the aldehyde dehydrogenase family.

The enzyme catalyses an aldehyde + NAD(+) + H2O = a carboxylate + NADH + 2 H(+). In Entamoeba histolytica (strain ATCC 30459 / HM-1:IMSS / ABRM), this protein is Aldehyde dehydrogenase 1.